The following is a 361-amino-acid chain: Cyclic AMP receptor-like protein C (361 aa).

The Extracellular portion of the chain corresponds to 1–18 (MGIEESQICNPSDREFLS). The helical transmembrane segment at 19–39 (VDILNIVTSSLSLMGSALTII) threads the bilayer. The Cytoplasmic segment spans residues 40 to 113 (SYIWKKVRRH…HGTYKQPTSK (74 aa)). Residues 114–134 (LPLLIFMLSIADFFTSFFIII) traverse the membrane as a helical segment. Over 135–166 (SQSYLINNSKSYSTPYSPDLKIHFSPCIILRA) the chain is Extracellular. A helical transmembrane segment spans residues 167–187 (IIQFFFLSTFFWTTCISYYLF). Residues 188 to 197 (HQLSSPGEEK) lie on the Cytoplasmic side of the membrane. A helical transmembrane segment spans residues 198 to 218 (YLLAIFNVVSWGIPFAISMVI). Topologically, residues 219-238 (TMTNSIVVNSDGWCEVAKPM) are extracellular. A helical transmembrane segment spans residues 239-259 (ELSLWFLPLFLCLLVCSIYYF). Residues 260 to 292 (RLRRLFRSKFEYRLQINDRLKQLDSTISRRLTL) are Cytoplasmic-facing. A helical transmembrane segment spans residues 293-313 (YIVVFVICWLPDVIQHFISFF). Over 314–318 (SKCTF) the chain is Extracellular. Residues 319-339 (FPLLILQNILTPSQGFWNFWI) form a helical membrane-spanning segment. Residues 340 to 361 (YSYTNKIARFTPSNDENKRLLQ) lie on the Cytoplasmic side of the membrane.

Belongs to the G-protein coupled receptor 5 family.

The protein localises to the membrane. In terms of biological role, receptor for cAMP. The polypeptide is Cyclic AMP receptor-like protein C (crlC) (Dictyostelium discoideum (Social amoeba)).